Reading from the N-terminus, the 253-residue chain is 5-oxoprolinase subunit A (253 aa).

Belongs to the LamB/PxpA family. In terms of assembly, forms a complex composed of PxpA, PxpB and PxpC.

It carries out the reaction 5-oxo-L-proline + ATP + 2 H2O = L-glutamate + ADP + phosphate + H(+). Its function is as follows. Catalyzes the cleavage of 5-oxoproline to form L-glutamate coupled to the hydrolysis of ATP to ADP and inorganic phosphate. In Bacillus cereus (strain Q1), this protein is 5-oxoprolinase subunit A.